The primary structure comprises 1019 residues: MDSTGRAYDGASEFKSVLVTEGTSHYTPVEVYNILDELKTIKITSTIAEQSVVSRTPIPLSKIGLQDVKKLFDINVIKCGSSLRIVDEPQVTFIVSYAKDIYDKFMCIEHDSAYEPSLTMHRVRVIYSMLNDYCAKMISEVPYESSFVGELPVKSVTLNKLGDRNMDALAEHLLFEHDVVNAQRENRIFYQRKSAPAVPVIFGDDLEPAVRERANLYHRYSVPYHQIELALHALANDLLSIQYCHPTVVYNYLSSRAPNFLRLDDQVSLKLTSAGIGTLMPRPVVQLLDYDLVYMSPLALNNLASRLLRKISLHLVMQMVTAVQQDLGEVVSVSSNVTNPASACLVRMNVQGVQTLAVFIAQSMLNPNISYGMISGLTLDCFSNFIYGACLMLFQALIPPSALTARQRLDINNRFAYFLIKCHATQATTARLVANQVIYPVDAIDQWQSNGRDVLVAIYNNLLPGELVLTNLIQTYFRGNTAQQAAEILIPADQTSYGANETRALSAPYLFGAPINMLAPDARLSTYKRDLALPDRSPILITTVEGQNSISIENLRHKTGLIRAMYLNGFVTQPPAWIRNANSNTALLSRFLDATPNLLGIYEAILANTYANAVNVYCDSVYRADIPIEWKLHQSVDPQDLLFGVFGIVPQYQILNEAVPDFFAGGEDILILQLIRAVYDTLSNKLGRNPADIFHLEEVFKVIEEIVSVLVQQKIDVRKYFTESMRSGSFSKPRWDNFLRRPVAQRLPNLYSVIMTQADHVYNYMTQLTHIIPITDCFYIVKNSGFVDRGSTGPVIASSSVYENVLKVVHTIADFDAANALRLQRRRVDNTSYTDSLSDMFNGLRSISSSEFVRSVNGRSVFTEGRIDAIKVNMRAKFDLQFITEEGGYSKPPNVKKLMFSDFLSFLDSHKSDYRPPLLTVPITIGLNNLGETNSNTLRMRSEAIDEYFSSYVGAQILVPINVVDTRVYTEFSELRNFFTGDVVIRDDPFDVWDGVKATYIPIGVHGVRLDPNGDQPPL.

Belongs to the phytoreovirus inner capsid protein P3 family. As to quaternary structure, homodimer. Homomultimer.

The protein localises to the virion. It is found in the host cytoplasm. Its function is as follows. Capsid protein which self-assembles to form the inner icosahedral capsid with a T=2 symmetry, and consisting of 60 P3 dimers. This chain is Outer capsid protein P3, found in Alopecurus aequalis (Barnyard grass).